A 7124-amino-acid polypeptide reads, in one-letter code: Replicase polyprotein 1ab (7124 aa).

The tract at residues 25–45 (SEKLGSPERSEEDGFCPSAAQ) is disordered. The region spanning 54–196 (LINHVRVDCS…PWSILLRKGG (143 aa)) is the CoV Nsp1 globular domain. The BetaCoV Nsp1 C-terminal domain maps to 217–247 (FNVEDACEEVHLNPKGKYSRKAYALLKGYRG). The CoV Nsp2 N-terminal domain maps to 251 to 511 (ILFLDQYGCD…TDAICRSLYM (261 aa)). Positions 390, 395, 411, and 414 each coordinate Zn(2+). Residues 390-414 (CCGDACDFRGWVPGNMMDGFLCPGC) are C4. Residues 518–706 (CGNLEQRAIL…VDKFKVFFKV (189 aa)) enclose the CoV Nsp2 middle domain. The CoV Nsp2 C-terminal domain occupies 726–832 (SNRVCLAGCK…LDQCWRFPCA (107 aa)). The 113-residue stretch at 834-946 (KKVEFNDKPK…MYCSFSAPDD (113 aa)) folds into the Ubiquitin-like 1 domain. The Peptidase C16 1 domain maps to 1031 to 1268 (AFDAIYSEAL…IAQLYGSCIT (238 aa)). The For PL1-PRO activity role is filled by Cys1068. 4 residues coordinate Zn(2+): Cys1145, Cys1148, Cys1171, and Cys1173. A C4-type 1 zinc finger spans residues 1145 to 1173 (CLKCDMDLKLQGLDAMFFYGDVVSHVCKC). Residues His1219 and Asp1230 each act as for PL1-PRO activity in the active site. Residues 1269 to 1429 (PNVCFVKGDV…VIEKCQVTSI (161 aa)) form the Macro domain. Residues 1484–1556 (DDARVFVQAH…VSQIRALLAN (73 aa)) form the DPUP domain. The Ubiquitin-like 2 domain maps to 1555-1610 (ANKVDVLCTVDGVNFRSCCVAEGEVFGKTLGSVFCDGINVTKVRCSAIHKGKVFFQ). In terms of domain architecture, Peptidase C16 2 spans 1625-1884 (AFGFDEPQLL…CVEYNPDLSQ (260 aa)). Cys1663 serves as the catalytic For PL2-PRO activity. Positions 1741, 1743, 1775, and 1777 each coordinate Zn(2+). A C4-type 2 zinc finger spans residues 1741–1777 (CKCGVKQEQRKGVDAVMHFGTLDKGDLAKGYTIACTC). Active-site for PL2-PRO activity residues include His1820 and Asp1834. Residues 1898–1999 (IKAQFRTFEK…TYFNRPSVVC (102 aa)) enclose the Nucleic acid-binding domain. A G2M domain is found at 2053 to 2202 (QVVSGFLSDL…TDNKVIYTTE (150 aa)). 2 helical membrane-spanning segments follow: residues 2232–2252 (FFLVATVFLLWFNFLYANVIL) and 2260–2280 (IGFFPTFVGQIVAWVKTTFGI). The segment at 2232 to 2408 (FFLVATVFLL…FTLLRFYIVV (177 aa)) is HD1. The 62-residue stretch at 2268–2329 (GQIVAWVKTT…AINVVQHVVD (62 aa)) folds into the 3Ecto domain. 2 disulfides stabilise this stretch: Cys2284-Cys2308 and Cys2299-Cys2305. A run of 2 helical transmembrane segments spans residues 2346–2366 (LVIGYSLYTVCFYPLFGLIGM) and 2388–2408 (FFVFVANMLPAFTLLRFYIVV). Positions 2416 to 2506 (CLCRHVMYGC…ELKRPVNPTD (91 aa)) are Y1. The region spanning 2416–2783 (CLCRHVMYGC…LTTPFSLKGG (368 aa)) is the CoV Nsp3 Y domain. His2420, Cys2425, Cys2430, Cys2433, Cys2466, His2469, Cys2473, and Cys2476 together coordinate Zn(2+). Residues 2420-2433 (HVMYGCSRPGCLFC) are ZF1. Residues 2466–2476 (CAKHQWNCLNC) form a ZF2 region. Positions 2507–2599 (SAYYLVTEVK…LVEKKLITTA (93 aa)) are Y2. The coV-Y stretch occupies residues 2507-2783 (SAYYLVTEVK…LTTPFSLKGG (277 aa)). The segment at 2600–2682 (NTGLSVSQTM…KSIMSAVNAG (83 aa)) is Y3. The segment at 2683 to 2783 (VDFTDESCNN…LTTPFSLKGG (101 aa)) is Y4. The next 7 membrane-spanning stretches (helical) occupy residues 2789–2809 (VLQWLFVVNLICFIVLWALMP), 2869–2889 (ACPVVVAVIDQDIGYTLFNVP), 3042–3062 (AFDLIHQVLGGLVRPIDFFAL), 3064–3084 (ASSVAGAILAIIVVLAFYYLI), 3096–3116 (VVVINVIVWCINFLMLFVFQV), 3123–3143 (LYACFYFYTTLYFPSEISVVM), and 3148–3168 (LVMYGAIMPLWFCIIYVAVVV). Residues 2789-3168 (VLQWLFVVNL…FCIIYVAVVV (380 aa)) are HD2. Residues 3182–3279 (LGTEVRSDGT…TASVTTSFLQ (98 aa)) form the Nsp4C domain. One can recognise a Peptidase C30 domain in the interval 3280–3582 (SGIVKMVFPT…YQQLAGVKLQ (303 aa)). Residues His3320 and Cys3424 each act as for 3CL-PRO activity in the active site. An HD3 region spans residues 3525–3808 (LVLDALASMT…VCCCYWGVLS (284 aa)). 7 consecutive transmembrane segments (helical) span residues 3591–3611 (GTCCWILASTLLFCSIISAFV), 3621–3641 (THMLGVTLCALCFVSFAMLLV), 3647–3667 (YLTMFIMPVLCTLFYTNYLVV), 3690–3710 (TYMDEVLYGVVLLVAMVFVTM), 3717–3737 (VFSVMFLVGRLVSLVSMWYFG), 3744–3764 (VLLFLTSLFGTYTWTTMLSLA), and 3788–3808 (LVLLSYLCIGYVCCCYWGVLS). The RdRp Nsp7 cofactor domain occupies 3870 to 3958 (SRLTDVKCVN…DYVRDSTVLQ (89 aa)). Residues 3959-4155 (ALQSEFVNMA…HNEVSSVVLQ (197 aa)) form the RdRp Nsp8 cofactor domain. Residues 4156–4265 (NNELMPQKLR…GTLSSTVRLQ (110 aa)) enclose the Nsp9 ssRNA-binding domain. The ExoN/MTase coactivator domain occupies 4266 to 4403 (AGTATEYASN…CVGTGSQFQS (138 aa)). Residues Cys4339, Cys4342, His4348, Cys4355, Cys4381, Cys4384, Cys4392, and Cys4394 each contribute to the Zn(2+) site. 2 zinc fingers span residues 4339 to 4355 (CIYCRSRVEHPDVDGLC) and 4381 to 4394 (CQVCGFWRDGSCSC). The region spanning 4408–4663 (FLNRVRGTSV…DSELFINGTY (256 aa)) is the NiRAN domain. Residues Asn4611 and Asp4620 each contribute to the Mn(2+) site. Residues 4664–4762 (REFDLVQYDF…MNMDVDTHRY (99 aa)) form the Nsp12 Interface domain. Zn(2+)-binding residues include His4693, Cys4699, Cys4704, Cys4708, and Cys4885. Residues 4763–5330 (RLSLKDLLLY…NMYLRSAVMQ (568 aa)) enclose the Nsp12 RNA-dependent RNA polymerase domain. Residues 4765-4979 (SLKDLLLYAA…HQKCLKSIAA (215 aa)) are rdRp Fingers N-ter. The interval 4980 to 5018 (TRGVPVVIGTTKFYGGWDDMLRRLIKDVDSPVLMGWDYP) is rdRp Palm N-ter. Positions 5010–5172 (PVLMGWDYPK…CYNSEFASKG (163 aa)) constitute a RdRp catalytic domain. The rdRp Fingers C-ter stretch occupies residues 5019-5077 (KCDRAMPNILRIISSLVLARKHDSCCSHTDRFYRLANECAQVLSEIVMCGGCYYVKPGG). 3 residues coordinate Zn(2+): His5040, Cys5043, and Cys5044. Residues 5078–5213 (TSSGDATTAF…EKGPHEFCSQ (136 aa)) are rdRp Palm C-ter. Active-site residues include Ser5157, Asp5158, and Asp5159. The rdRp Thumb stretch occupies residues 5214-5330 (HTMLVKMDGD…NMYLRSAVMQ (117 aa)). Positions 5331–5443 (SVGACVVCSS…EDFNKIASCK (113 aa)) constitute a CV ZBD domain. Residues Cys5335, Cys5338, Cys5346, Cys5349, Cys5356, Cys5359, His5363, His5369, Cys5380, Cys5385, Cys5402, and His5405 each coordinate Zn(2+). The region spanning 5586–5767 (SVPETFQNNV…MCCLGPDIFL (182 aa)) is the (+)RNA virus helicase ATP-binding domain. 5611 to 5618 (GPPGTGKS) is a binding site for ATP. In terms of domain architecture, (+)RNA virus helicase C-terminal spans 5768–5937 (GTCYRCPKEI…RLQCTTNLFK (170 aa)). In terms of domain architecture, ExoN spans 6001–6216 (LFITRDEAIR…RCLAVHDCFC (216 aa)). Residues Asp6019, Glu6021, and Glu6120 contribute to the active site. 7 residues coordinate Zn(2+): Cys6136, Cys6139, Cys6155, His6158, His6186, Cys6190, and His6193. Active-site residues include His6197 and Asp6202. Cys6208 contacts Zn(2+). The N7-MTase domain occupies 6225-6451 (YPIISNEVSV…NLWNTFTRLQ (227 aa)). 6260 to 6266 (DIGNPKG) serves as a coordination point for S-adenosyl-L-methionine. Residues 6338–6352 (CNGGSLYVNKHAFHT) are gpppA-binding. 4 residues coordinate Zn(2+): Cys6376, Cys6397, Cys6408, and His6411. Positions 6452–6512 (SLENVVYNLV…NVAVELFAKR (61 aa)) constitute a Nsp15 N-terminal oligomerization domain. Residues 6513–6633 (SIRPHPELKL…FAMRRDGDDV (121 aa)) form the AV-Nsp11N/CoV-Nsp15M domain. Residues 6683 to 6822 (APRSEMEKDF…NEEKVMTFYP (140 aa)) form the NendoU domain. Active-site residues include His6713, His6728, Lys6768, Lys6871, Asp6955, Lys6995, and Glu7028. Residues 6827-7121 (AADWKPGYVM…KEVFVGDSLV (295 aa)) enclose the Nidovirus-type SAM-dependent 2'-O-MTase domain.

This sequence belongs to the coronaviruses polyprotein 1ab family. As to quaternary structure, interacts with host PHB and PHB2. Interacts with papain-like protease nsp3 and non-structural protein 6. In terms of assembly, monomer. Homodimer. Only the homodimer shows catalytic activity. As to quaternary structure, interacts with nsp8 and nsp12 to form the replication-transcription complex (RTC): nsp12, nsp7, two subunits of nsp8, and up to two subunits of nsp13. Interacts with nsp7, nsp13 and nsp12 to form the replication-transcription complex (RTC): nsp12, nsp7, two subunits of nsp8, and up to two subunits of nsp13. In terms of assembly, interacts with nsp12. As to quaternary structure, interacts with proofreading exoribonuclease nsp14 and 2'-O-methyltransferase nsp16; these interactions enhance nsp14 and nsp16 enzymatic activities. Interacts with nsp7 and nsp8 to form the replication-transcription complex (RTC): nsp12, nsp7, two subunits of nsp8, and up to two subunits of nsp13. Interacts with nsp9. In terms of assembly, interacts with nsp8 to form the replication-transcription complex (RTC): nsp12, nsp7, two subunits of nsp8, and up to two subunits of nsp13. It depends on Mn(2+) as a cofactor. Mg(2+) serves as cofactor. Specific enzymatic cleavages in vivo by its own proteases yield mature proteins. 3CL-PRO and PL-PRO proteinases are autocatalytically processed.

Its subcellular location is the host membrane. The protein resides in the host cytoplasm. The protein localises to the host perinuclear region. It is found in the host endoplasmic reticulum-Golgi intermediate compartment. The catalysed reaction is RNA(n) + a ribonucleoside 5'-triphosphate = RNA(n+1) + diphosphate. The enzyme catalyses ATP + H2O = ADP + phosphate + H(+). It carries out the reaction Thiol-dependent hydrolysis of ester, thioester, amide, peptide and isopeptide bonds formed by the C-terminal Gly of ubiquitin (a 76-residue protein attached to proteins as an intracellular targeting signal).. It catalyses the reaction a 5'-end (N(7)-methyl 5'-triphosphoguanosine)-ribonucleoside in mRNA + S-adenosyl-L-methionine = a 5'-end (N(7)-methyl 5'-triphosphoguanosine)-(2'-O-methyl-ribonucleoside) in mRNA + S-adenosyl-L-homocysteine + H(+). The catalysed reaction is uridylyl-uridylyl-ribonucleotide-RNA = a 3'-end uridylyl-2',3'-cyclophospho-uridine-RNA + a 5'-end dephospho-ribonucleoside-RNA. The enzyme catalyses a 5'-end diphospho-ribonucleoside in mRNA + GTP + H(+) = a 5'-end (5'-triphosphoguanosine)-ribonucleoside in mRNA + diphosphate. It carries out the reaction a 5'-end (5'-triphosphoguanosine)-ribonucleoside in mRNA + S-adenosyl-L-methionine = a 5'-end (N(7)-methyl 5'-triphosphoguanosine)-ribonucleoside in mRNA + S-adenosyl-L-homocysteine. The replicase polyprotein of coronaviruses is a multifunctional protein: it contains the activities necessary for the transcription of negative stranded RNA, leader RNA, subgenomic mRNAs and progeny virion RNA as well as proteinases responsible for the cleavage of the polyprotein into functional products. In terms of biological role, inhibits host translation by interacting with the 40S ribosomal subunit. The nsp1-40S ribosome complex further induces an endonucleolytic cleavage near the 5'UTR of host mRNAs, targeting them for degradation. Viral mRNAs are not susceptible to nsp1-mediated endonucleolytic RNA cleavage thanks to the presence of a 5'-end leader sequence and are therefore protected from degradation. By suppressing host gene expression, nsp1 facilitates efficient viral gene expression in infected cells and evasion from host immune response. Its function is as follows. May play a role in the modulation of host cell survival signaling pathway by interacting with host PHB and PHB2. Indeed, these two proteins play a role in maintaining the functional integrity of the mitochondria and protecting cells from various stresses. Functionally, responsible for the cleavages located at the N-terminus of the replicase polyprotein. In addition, PL-PRO possesses a deubiquitinating/deISGylating activity and processes both 'Lys-48'- and 'Lys-63'-linked polyubiquitin chains from cellular substrates. Participates together with nsp4 in the assembly of virally-induced cytoplasmic double-membrane vesicles necessary for viral replication. Antagonizes innate immune induction of type I interferon by blocking the phosphorylation, dimerization and subsequent nuclear translocation of host IRF3. Also prevents host NF-kappa-B signaling. Participates in the assembly of virally-induced cytoplasmic double-membrane vesicles necessary for viral replication. In terms of biological role, cleaves the C-terminus of replicase polyprotein at 11 sites. Recognizes substrates containing the core sequence [ILMVF]-Q-|-[SGACN]. Also able to bind an ADP-ribose-1''-phosphate (ADRP). Its function is as follows. Plays a role in the initial induction of autophagosomes from host endoplasmic reticulum. Later, limits the expansion of these phagosomes that are no longer able to deliver viral components to lysosomes. Functionally, forms a hexadecamer with nsp8 (8 subunits of each) that may participate in viral replication by acting as a primase. Alternatively, may synthesize substantially longer products than oligonucleotide primers. Forms a hexadecamer with nsp7 (8 subunits of each) that may participate in viral replication by acting as a primase. Alternatively, may synthesize substantially longer products than oligonucleotide primers. In terms of biological role, forms a primer, NSP9-pU, which is utilized by the polymerase for the initiation of RNA chains. Interacts with ribosome signal recognition particle RNA (SRP). Together with NSP8, suppress protein integration into the cell membrane, thereby disrupting host immune defenses. Its function is as follows. Plays a pivotal role in viral transcription by stimulating both nsp14 3'-5' exoribonuclease and nsp16 2'-O-methyltransferase activities. Therefore plays an essential role in viral mRNAs cap methylation. Functionally, RNA-directed RNA polymerase that catalyzes the transcription of viral genomic and subgenomic RNAs. Acts in complex with nsp7 and nsp8 to transcribe both the minus and positive strands of genomic RNA. The kinase-like NiRAN domain of NSP12 attaches one or more nucleotides to the amino terminus of NSP9, forming a covalent RNA-protein intermediate that serves as transcription/replication primer. Subgenomic RNAs (sgRNAs) are formed by discontinuous transcription: The polymerase has the ability to pause at transcription-regulating sequences (TRS) and jump to the leader TRS, resulting in a major deletion. This creates a series of subgenomic RNAs that are replicated, transcribed and translated. In addition, Nsp12 is a subunit of the viral RNA capping enzyme that catalyzes the RNA guanylyltransferase reaction for genomic and sub-genomic RNAs. Subsequently, the NiRAN domain transfers RNA to GDP, and forms the core cap structure GpppA-RNA. Multi-functional protein with a zinc-binding domain in N-terminus displaying RNA and DNA duplex-unwinding activities with 5' to 3' polarity. Activity of helicase is dependent on magnesium. In terms of biological role, plays a role in viral RNA synthesis through two distinct activities. The N7-guanine methyltransferase activity plays a role in the formation of the cap structure GpppA-RNA. The proofreading exoribonuclease reduces the sensitivity of the virus to RNA mutagens during replication. This activity acts on both ssRNA and dsRNA in a 3'-5' direction. Its function is as follows. Plays a role in viral transcription/replication and prevents the simultaneous activation of host cell dsRNA sensors, such as MDA5/IFIH1, OAS, and PKR. Acts by degrading the 5'-polyuridines generated during replication of the poly(A) region of viral genomic and subgenomic RNAs. Catalyzes a two-step reaction in which a 2'3'-cyclic phosphate (2'3'-cP) is first generated by 2'-O transesterification, which is then hydrolyzed to a 3'-phosphate (3'-P). If not degraded, poly(U) RNA would hybridize with poly(A) RNA tails and activate host dsRNA sensors. Functionally, methyltransferase that mediates mRNA cap 2'-O-ribose methylation to the 5'-cap structure of viral mRNAs. N7-methyl guanosine cap is a prerequisite for binding of nsp16. Therefore plays an essential role in viral mRNAs cap methylation which is essential to evade immune system. The chain is Replicase polyprotein 1ab (rep) from Murine coronavirus (strain 2) (MHV-2).